The primary structure comprises 160 residues: Putative 4-hydroxy-4-methyl-2-oxoglutarate aldolase (160 aa).

Residues 75–78 (GDQL) and R97 contribute to the substrate site. D98 contacts a divalent metal cation.

Belongs to the class II aldolase/RraA-like family. In terms of assembly, homotrimer. It depends on a divalent metal cation as a cofactor.

The enzyme catalyses 4-hydroxy-4-methyl-2-oxoglutarate = 2 pyruvate. It catalyses the reaction oxaloacetate + H(+) = pyruvate + CO2. Catalyzes the aldol cleavage of 4-hydroxy-4-methyl-2-oxoglutarate (HMG) into 2 molecules of pyruvate. Also contains a secondary oxaloacetate (OAA) decarboxylase activity due to the common pyruvate enolate transition state formed following C-C bond cleavage in the retro-aldol and decarboxylation reactions. The chain is Putative 4-hydroxy-4-methyl-2-oxoglutarate aldolase from Vibrio vulnificus (strain YJ016).